A 166-amino-acid polypeptide reads, in one-letter code: Small ribosomal subunit protein uS5 (166 aa).

The 64-residue stretch at 11–74 folds into the S5 DRBM domain; that stretch reads LQEKLIAVNR…EKARRNMINV (64 aa).

It belongs to the universal ribosomal protein uS5 family. As to quaternary structure, part of the 30S ribosomal subunit. Contacts proteins S4 and S8.

In terms of biological role, with S4 and S12 plays an important role in translational accuracy. Its function is as follows. Located at the back of the 30S subunit body where it stabilizes the conformation of the head with respect to the body. The sequence is that of Small ribosomal subunit protein uS5 from Cronobacter sakazakii (strain ATCC BAA-894) (Enterobacter sakazakii).